The chain runs to 467 residues: Probable tryptophanase (467 aa).

Lys-263 carries the post-translational modification N6-(pyridoxal phosphate)lysine.

Belongs to the beta-eliminating lyase family. It depends on pyridoxal 5'-phosphate as a cofactor.

The catalysed reaction is L-tryptophan + H2O = indole + pyruvate + NH4(+). The protein operates within amino-acid degradation; L-tryptophan degradation via pyruvate pathway; indole and pyruvate from L-tryptophan: step 1/1. This Aeropyrum pernix (strain ATCC 700893 / DSM 11879 / JCM 9820 / NBRC 100138 / K1) protein is Probable tryptophanase (tnaA).